Here is a 465-residue protein sequence, read N- to C-terminus: Pancreatic triacylglycerol lipase (465 aa).

Positions Met1 to Gly16 are cleaved as a signal peptide. Intrachain disulfides connect Cys20-Cys26 and Cys107-Cys118. The active-site Nucleophile is Ser169. N-linked (GlcNAc...) asparagine glycosylation occurs at Asn183. Residue Asp193 is the Charge relay system of the active site. Glu204, Arg207, Asp209, and Asp212 together coordinate Ca(2+). Residues Cys254 and Cys278 are joined by a disulfide bond. Catalysis depends on His280, which acts as the Charge relay system. 3 cysteine pairs are disulfide-bonded: Cys302/Cys313, Cys316/Cys321, and Cys449/Cys465. Residues Trp355–Cys465 form the PLAT domain.

Belongs to the AB hydrolase superfamily. Lipase family. Forms a 1:1 stoichiometric complex with (pro)colipase/CLPS.

The protein resides in the secreted. It carries out the reaction a triacylglycerol + H2O = a diacylglycerol + a fatty acid + H(+). It catalyses the reaction 1,2,3-tributanoylglycerol + H2O = dibutanoylglycerol + butanoate + H(+). The enzyme catalyses 1,2,3-tri-(9Z-octadecenoyl)-glycerol + H2O = di-(9Z)-octadecenoylglycerol + (9Z)-octadecenoate + H(+). The catalysed reaction is all-trans-retinyl hexadecanoate + H2O = all-trans-retinol + hexadecanoate + H(+). It carries out the reaction 1,2-di-(9Z-octadecenoyl)-glycerol + H2O = (9Z-octadecenoyl)-glycerol + (9Z)-octadecenoate + H(+). Inhibited by bile salts, is reactivated by (pro)colipase/CLPS. Functionally, plays an important role in fat metabolism. It preferentially splits the esters of long-chain fatty acids at positions 1 and 3, producing mainly 2-monoacylglycerol and free fatty acids, and shows considerably higher activity against insoluble emulsified substrates than against soluble ones. The chain is Pancreatic triacylglycerol lipase from Homo sapiens (Human).